The sequence spans 319 residues: Ribosomal RNA small subunit methyltransferase H (319 aa).

S-adenosyl-L-methionine contacts are provided by residues 39–41 (GGH), aspartate 59, phenylalanine 83, aspartate 104, and glutamine 111.

Belongs to the methyltransferase superfamily. RsmH family.

Its subcellular location is the cytoplasm. It carries out the reaction cytidine(1402) in 16S rRNA + S-adenosyl-L-methionine = N(4)-methylcytidine(1402) in 16S rRNA + S-adenosyl-L-homocysteine + H(+). Specifically methylates the N4 position of cytidine in position 1402 (C1402) of 16S rRNA. The polypeptide is Ribosomal RNA small subunit methyltransferase H (Ralstonia nicotianae (strain ATCC BAA-1114 / GMI1000) (Ralstonia solanacearum)).